The primary structure comprises 287 residues: Cyclopropane mycolic acid synthase MmaA2 (287 aa).

Residues 33-34, 72-74, 94-99, 123-124, and Ile-136 each bind S-adenosyl-L-methionine; these read YS, GCG, TLSKNQ, and WE. The active site involves Cys-269.

This sequence belongs to the CFA/CMAS family.

The enzyme catalyses a 1-acyl-2-(9Z)-enoyl-sn-glycero-3-phospholipid + S-adenosyl-L-methionine = a 1-acyl-2-(9-cyclopronane)-acyl-sn-glycero-3-phospholipid + S-adenosyl-L-homocysteine + H(+). It participates in lipid metabolism; mycolic acid biosynthesis. In terms of biological role, catalyzes the conversion of a double bond to a cis cyclopropane ring at the distal position of an alpha mycolic acid via the transfer of a methylene group from S-adenosyl-L-methionine. MmaA2 also catalyzes the biosynthesis of the cis-cyclopropanated methoxymycolates. Cyclopropanated mycolic acids are key factors participating in cell envelope permeability, host immunomodulation and persistence. The polypeptide is Cyclopropane mycolic acid synthase MmaA2 (mmaA2) (Mycobacterium tuberculosis (strain ATCC 25177 / H37Ra)).